Here is a 339-residue protein sequence, read N- to C-terminus: Protein-glutamate methylesterase/protein-glutamine glutaminase 3 (339 aa).

Residues 2 to 119 (NIGIVNDLPL…GLSTDASPQA (118 aa)) form the Response regulatory domain. At Asp53 the chain carries 4-aspartylphosphate. The CheB-type methylesterase domain maps to 141-336 (PGPAPTRGQP…PQLIARIALT (196 aa)). Residues Ser158, His185, and Asp278 contribute to the active site.

It belongs to the CheB family. In terms of processing, phosphorylated by CheA. Phosphorylation of the N-terminal regulatory domain activates the methylesterase activity.

The protein localises to the cytoplasm. The enzyme catalyses [protein]-L-glutamate 5-O-methyl ester + H2O = L-glutamyl-[protein] + methanol + H(+). It carries out the reaction L-glutaminyl-[protein] + H2O = L-glutamyl-[protein] + NH4(+). Involved in chemotaxis. Part of a chemotaxis signal transduction system that modulates chemotaxis in response to various stimuli. Catalyzes the demethylation of specific methylglutamate residues introduced into the chemoreceptors (methyl-accepting chemotaxis proteins or MCP) by CheR. Also mediates the irreversible deamidation of specific glutamine residues to glutamic acid. The chain is Protein-glutamate methylesterase/protein-glutamine glutaminase 3 from Burkholderia orbicola (strain AU 1054).